Reading from the N-terminus, the 212-residue chain is Uracil phosphoribosyltransferase (212 aa).

5-phospho-alpha-D-ribose 1-diphosphate contacts are provided by residues R78, R103, and 130-138; that span reads DPMLATGGS. Residues I193 and 198–200 each bind uracil; that span reads GDA. D199 provides a ligand contact to 5-phospho-alpha-D-ribose 1-diphosphate.

The protein belongs to the UPRTase family. Mg(2+) serves as cofactor.

The catalysed reaction is UMP + diphosphate = 5-phospho-alpha-D-ribose 1-diphosphate + uracil. Its pathway is pyrimidine metabolism; UMP biosynthesis via salvage pathway; UMP from uracil: step 1/1. Its activity is regulated as follows. Allosterically activated by GTP. Its function is as follows. Catalyzes the conversion of uracil and 5-phospho-alpha-D-ribose 1-diphosphate (PRPP) to UMP and diphosphate. This chain is Uracil phosphoribosyltransferase, found in Bordetella avium (strain 197N).